Here is a 555-residue protein sequence, read N- to C-terminus: Glutamine--tRNA ligase (555 aa).

A 'HIGH' region motif is present at residues Pro-35–His-45. ATP is bound by residues Glu-36–Asn-38 and His-42–Ser-48. Positions 68 and 213 each coordinate L-glutamine. ATP is bound by residues Thr-232 and Arg-262–Leu-263. Positions Ile-269–Arg-273 match the 'KMSKS' region motif.

The protein belongs to the class-I aminoacyl-tRNA synthetase family. Monomer.

Its subcellular location is the cytoplasm. It catalyses the reaction tRNA(Gln) + L-glutamine + ATP = L-glutaminyl-tRNA(Gln) + AMP + diphosphate. The sequence is that of Glutamine--tRNA ligase from Azotobacter vinelandii (strain DJ / ATCC BAA-1303).